The chain runs to 598 residues: 4-coumarate--CoA ligase-like 6 (598 aa).

The ATP site is built by Ser232, Ser233, Gly234, Thr235, Thr236, and Lys240. Arg318 lines the CoA pocket. The SBD1 stretch occupies residues 320–389 (DLAAAARAVE…TVFPSVQIVQ (70 aa)). Residues Gly367, Gln389, and Thr394 each coordinate (E)-4-coumaroyl-AMP. ATP contacts are provided by Gln389, Thr394, Asp475, and Arg490. The segment at 390–454 (SYGLTESTGP…IRGPVVMKGY (65 aa)) is SBD2. (E)-4-coumaroyl-AMP is bound by residues Lys492 and Lys496. Positions 498 and 499 each coordinate CoA. Residue Lys581 participates in ATP binding.

Belongs to the ATP-dependent AMP-binding enzyme family. Requires Mg(2+) as cofactor.

It catalyses the reaction (E)-4-coumarate + ATP + CoA = (E)-4-coumaroyl-CoA + AMP + diphosphate. It carries out the reaction (E)-4-coumarate + ATP + H(+) = (E)-4-coumaroyl-AMP + diphosphate. The catalysed reaction is (E)-4-coumaroyl-AMP + CoA = (E)-4-coumaroyl-CoA + AMP + H(+). Carboxylate--CoA ligase that may use 4-coumarate as substrate. Follows a two-step reaction mechanism, wherein the carboxylate substrate first undergoes adenylation by ATP, followed by a thioesterification in the presence of CoA to yield the final CoA thioester. This chain is 4-coumarate--CoA ligase-like 6 (4CLL6), found in Oryza sativa subsp. japonica (Rice).